A 252-amino-acid polypeptide reads, in one-letter code: Trans-aconitate 2-methyltransferase (252 aa).

It belongs to the methyltransferase superfamily. Tam family.

The protein localises to the cytoplasm. The enzyme catalyses trans-aconitate + S-adenosyl-L-methionine = (E)-3-(methoxycarbonyl)pent-2-enedioate + S-adenosyl-L-homocysteine. Catalyzes the S-adenosylmethionine monomethyl esterification of trans-aconitate. In Escherichia coli O1:K1 / APEC, this protein is Trans-aconitate 2-methyltransferase.